Consider the following 297-residue polypeptide: Adrenocorticotropic hormone receptor (297 aa).

The Extracellular portion of the chain corresponds to 1-23; sequence MKHITDLYESVNSTMSNKSDCPP. Asparagine 12 and asparagine 17 each carry an N-linked (GlcNAc...) asparagine glycan. Cystine bridges form between cysteine 21–cysteine 253 and cysteine 245–cysteine 251. A helical transmembrane segment spans residues 24 to 49; it reads VVLPEEVFFTISVIGVLENLIVLLAV. Residues 50–58 are Cytoplasmic-facing; the sequence is IKNKNLQSP. The chain crosses the membrane as a helical span at residues 59 to 79; that stretch reads MYFFICSLAISDMLGSLYKIL. Topologically, residues 80 to 104 are extracellular; it reads ENILIIFRNMGYLEPRGGFESTADD. The helical transmembrane segment at 105–126 threads the bilayer; it reads VVDSLFILSLLGSICSLSAIAA. Over 127–147 the chain is Cytoplasmic; it reads DRYITIFHALQYQRLVTPRRA. Residues 148 to 168 traverse the membrane as a helical segment; the sequence is AVVLLIIWACCIGSGITIVTF. At 169-180 the chain is on the extracellular side; the sequence is SHHVPAVIAFTA. A helical membrane pass occupies residues 181–199; it reads LFPLMLVFILCLYGHMFLL. The Cytoplasmic segment spans residues 200 to 217; it reads ARSHARRVSTLPRANMKG. A helical transmembrane segment spans residues 218–244; that stretch reads AITLTVLLGVFIFCWAPFVLHILLMTF. Residues 245–256 lie on the Extracellular side of the membrane; the sequence is CPADPYCACYLA. The helical transmembrane segment at 257 to 278 threads the bilayer; the sequence is LFQVNAVLIMCNAIIDPFIYAF. Residues 279–297 are Cytoplasmic-facing; it reads RSPELRDAFKKMIICKRYP. Cysteine 293 is lipidated: S-palmitoyl cysteine.

It belongs to the G-protein coupled receptor 1 family. As to quaternary structure, homodimer. Interacts with corticotropin (ACTH). Interacts with MRAP; this interaction targets MC2R to the plasma membrane. Interacts with MRAP2; competing with MRAP for binding to MC2R and impairing the binding of corticotropin (ACTH). Ubiquitinated by MGRN1 that may be involved in post-endocytic trafficking and/or degradation of internalized receptor. As to expression, expressed in skin and adrenal gland tissues.

The protein resides in the cell membrane. In terms of biological role, hormone receptor primarily expressed in adrenal cortex that plays a key role in regulating adrenocortical function. Upon corticotropin (ACTH) binding, facilitates the release of adrenal glucocorticoids, including cortisol and corticosterone. In addition, MC2R is required for fetal and neonatal adrenal gland development. Mechanistically, activates adenylate cyclase (cAMP), the MAPK cascade as well as the cAMP-dependent protein kinase A pathway leading to steroidogenic factor 1/NR5A1-mediated transcriptional activation. This chain is Adrenocorticotropic hormone receptor (MC2R), found in Sus scrofa (Pig).